A 459-amino-acid polypeptide reads, in one-letter code: Cell division protein FtsZ (459 aa).

Residues 25–29 (GAGSN), 112–114 (GTG), E143, R147, and D191 contribute to the GTP site. Disordered regions lie at residues 383–405 (DQAPNSTNDDMEPRVSLTNDAGE) and 427–459 (IPERKNVVVGMPDEETKESDIHDIPAFLRKKRD).

The protein belongs to the FtsZ family. In terms of assembly, homodimer. Polymerizes to form a dynamic ring structure in a strictly GTP-dependent manner. Interacts directly with several other division proteins.

It localises to the cytoplasm. Functionally, essential cell division protein that forms a contractile ring structure (Z ring) at the future cell division site. The regulation of the ring assembly controls the timing and the location of cell division. One of the functions of the FtsZ ring is to recruit other cell division proteins to the septum to produce a new cell wall between the dividing cells. Binds GTP and shows GTPase activity. The polypeptide is Cell division protein FtsZ (Rickettsia bellii (strain RML369-C)).